We begin with the raw amino-acid sequence, 215 residues long: Protein Syd (215 aa).

Belongs to the Syd family.

Its subcellular location is the cell inner membrane. In terms of biological role, interacts with the SecY protein in vivo. May bind preferentially to an uncomplexed state of SecY, thus functioning either as a chelating agent for excess SecY in the cell or as a regulatory factor that negatively controls the translocase function. In Shewanella amazonensis (strain ATCC BAA-1098 / SB2B), this protein is Protein Syd.